The chain runs to 516 residues: Glycerol-3-phosphate dehydrogenase 1 (516 aa).

Asp28–Glu56 provides a ligand contact to FAD.

This sequence belongs to the FAD-dependent glycerol-3-phosphate dehydrogenase family. FAD serves as cofactor.

The protein resides in the cytoplasm. It carries out the reaction a quinone + sn-glycerol 3-phosphate = dihydroxyacetone phosphate + a quinol. This chain is Glycerol-3-phosphate dehydrogenase 1 (glpD1), found in Mycobacterium bovis (strain ATCC BAA-935 / AF2122/97).